A 124-amino-acid chain; its full sequence is Small ribosomal subunit protein uS12 (124 aa).

Aspartate 89 is subject to 3-methylthioaspartic acid.

It belongs to the universal ribosomal protein uS12 family. In terms of assembly, part of the 30S ribosomal subunit. Contacts proteins S8 and S17. May interact with IF1 in the 30S initiation complex.

Functionally, with S4 and S5 plays an important role in translational accuracy. In terms of biological role, interacts with and stabilizes bases of the 16S rRNA that are involved in tRNA selection in the A site and with the mRNA backbone. Located at the interface of the 30S and 50S subunits, it traverses the body of the 30S subunit contacting proteins on the other side and probably holding the rRNA structure together. The combined cluster of proteins S8, S12 and S17 appears to hold together the shoulder and platform of the 30S subunit. The chain is Small ribosomal subunit protein uS12 from Shewanella frigidimarina (strain NCIMB 400).